The sequence spans 216 residues: Ephrin-A1 (216 aa).

Positions 1 to 28 (MMELYRAAVQLIVGVGLGVGLWLREAQG) are cleaved as a signal peptide. Residues 29–161 (ERHIVFWNSS…RLRVHVSGRT (133 aa)) form the Ephrin RBD domain. The N-linked (GlcNAc...) asparagine glycan is linked to asparagine 36. Cysteines 61 and 102 form a disulfide. Residues 162 to 181 (TPPPVNVHTPRSHIQSDEPE) are disordered. Residue serine 195 is the site of GPI-anchor amidated serine attachment. The propeptide at 196–216 (AAPGTPCTLYGLLLAALLLRL) is removed in mature form.

Belongs to the ephrin family. Binds to the receptor tyrosine kinases EPHA2, EPHA4, EPHA5, EPHA6 and EPHA7. Also binds with low affinity to EPHA1.

It localises to the membrane. Functionally, cell surface GPI-bound ligand for Eph receptors, a family of receptor tyrosine kinases which are crucial for migration, repulsion and adhesion during neuronal, vascular and epithelial development. Binds promiscuously Eph receptors residing on adjacent cells, leading to contact-dependent bidirectional signaling into neighboring cells. This is Ephrin-A1 (efna1) from Xenopus laevis (African clawed frog).